Consider the following 63-residue polypeptide: Large ribosomal subunit protein uL29 (63 aa).

It belongs to the universal ribosomal protein uL29 family.

The sequence is that of Large ribosomal subunit protein uL29 from Shewanella halifaxensis (strain HAW-EB4).